We begin with the raw amino-acid sequence, 548 residues long: Protein GPR108 (548 aa).

The signal sequence occupies residues 1 to 32 (MAVSERRGLGRGSPAEWGPWLLLLLLLGGSSG). N-linked (GlcNAc...) asparagine glycans are attached at residues N57, N63, and N109. The interval 165-190 (DHAGTTAAPDKAKSKPTGLQGDRQGV) is disordered. Residues N205 and N209 are each glycosylated (N-linked (GlcNAc...) asparagine). Transmembrane regions (helical) follow at residues 268 to 288 (LYMVMSACFLGAGIFWVSILC), 297 to 317 (IHWLMAALTFTKSVSLLFHSI), 341 to 361 (LLKGALLFITIALIGSGWAFV), 372 to 392 (IFGIVIPLQVLANVAYIVMES), 406 to 426 (ILFLVDLICCGTILFPVVWSI), 454 to 474 (VMVICYIYFTRIIAILLRAVV), and 478 to 498 (WQWLYQLLVEGSTLAFFVLTG). N539 is a glycosylation site (N-linked (GlcNAc...) asparagine).

This sequence belongs to the LU7TM family.

Its subcellular location is the golgi apparatus. It localises to the cis-Golgi network membrane. The protein resides in the trans-Golgi network membrane. It is found in the golgi apparatus membrane. Its function is as follows. May play a role in intracellular immune modulation by activating NF-kappaB response and attenuating Toll-like-receptor response. The sequence is that of Protein GPR108 (GPR108) from Bos taurus (Bovine).